The sequence spans 257 residues: Thiazole synthase (257 aa).

The active-site Schiff-base intermediate with DXP is the Lys-95. Residues Gly-156, 182–183 (AG), and 204–205 (NT) contribute to the 1-deoxy-D-xylulose 5-phosphate site.

Belongs to the ThiG family. As to quaternary structure, homotetramer. Forms heterodimers with either ThiH or ThiS.

The protein localises to the cytoplasm. The catalysed reaction is [ThiS sulfur-carrier protein]-C-terminal-Gly-aminoethanethioate + 2-iminoacetate + 1-deoxy-D-xylulose 5-phosphate = [ThiS sulfur-carrier protein]-C-terminal Gly-Gly + 2-[(2R,5Z)-2-carboxy-4-methylthiazol-5(2H)-ylidene]ethyl phosphate + 2 H2O + H(+). Its pathway is cofactor biosynthesis; thiamine diphosphate biosynthesis. In terms of biological role, catalyzes the rearrangement of 1-deoxy-D-xylulose 5-phosphate (DXP) to produce the thiazole phosphate moiety of thiamine. Sulfur is provided by the thiocarboxylate moiety of the carrier protein ThiS. In vitro, sulfur can be provided by H(2)S. The sequence is that of Thiazole synthase from Fusobacterium nucleatum subsp. nucleatum (strain ATCC 25586 / DSM 15643 / BCRC 10681 / CIP 101130 / JCM 8532 / KCTC 2640 / LMG 13131 / VPI 4355).